A 200-amino-acid polypeptide reads, in one-letter code: Translation machinery-associated protein 22 (200 aa).

One can recognise an SUI1 domain in the interval 106–177 (VQIKRVERNK…DVLEWLVEVH (72 aa)).

It belongs to the DENR family. Interacts with the 40S ribosomal subunit.

The protein localises to the cytoplasm. The sequence is that of Translation machinery-associated protein 22 (TMA22) from Coccidioides immitis (strain RS) (Valley fever fungus).